Reading from the N-terminus, the 54-residue chain is Conotoxin mr5.4b (54 aa).

A signal peptide spans 1 to 14; sequence ILLLLIASAPSVDA. Positions 15 to 40 are excised as a propeptide; it reads QLKTKDDVPLASFHANVKRTLQKLLN. Glutamate 52 carries the 4-carboxyglutamate modification.

Belongs to the conotoxin T superfamily. Contains 2 disulfide bonds that can be either 'C1-C3, C2-C4' or 'C1-C4, C2-C3', since these disulfide connectivities have been observed for conotoxins with cysteine framework V (for examples, see AC P0DQQ7 and AC P81755). In terms of tissue distribution, expressed by the venom duct.

It is found in the secreted. The polypeptide is Conotoxin mr5.4b (Conus marmoreus (Marble cone)).